The primary structure comprises 525 residues: Beta-1,4-xylosyltransferase IRX14 (525 aa).

At Met-1 to Leu-35 the chain is on the cytoplasmic side. The chain crosses the membrane as a helical; Signal-anchor for type II membrane protein span at residues Ile-36–Phe-56. Topologically, residues Arg-57–Asn-525 are lumenal. N-linked (GlcNAc...) asparagine glycans are attached at residues Asn-102, Asn-204, and Asn-326. The disordered stretch occupies residues Arg-452 to Asn-525. Residues Pro-471–Pro-488 are compositionally biased toward polar residues. The span at Thr-489–His-503 shows a compositional bias: basic residues. A compositionally biased stretch (polar residues) spans Thr-508–Ser-519.

The protein belongs to the glycosyltransferase 43 family. As to expression, expressed in developing interfascicular fibers and xylem cells in stems and developing secondary xylem in roots.

Its subcellular location is the golgi apparatus membrane. The enzyme catalyses [(1-&gt;4)-beta-D-xylan](n) + UDP-alpha-D-xylose = [(1-&gt;4)-beta-D-xylan](n+1) + UDP + H(+). Functionally, involved in the synthesis of the hemicellulose glucuronoxylan, a major component of secondary cell walls. Involved in the elongation of glucuronoxylan xylosyl backbone. Xylan xylosyltransferase that acts cooperatively with IRX9 to achieve the successive addition of xylosyl residues during xylan backbone elongation. Required for the proper composition and structural properties of released seed coat mucilage. Required for the production of highly branched xylan polymers in seed coat mucilage. Xylan with xylose side chains seems to be necessary for pectin attachment to the seed surface. Together with MUCI70, required for xylan and pectin synthesis in seed coat epidermal (SCE) cells. This chain is Beta-1,4-xylosyltransferase IRX14, found in Arabidopsis thaliana (Mouse-ear cress).